The primary structure comprises 418 residues: Mitochondrial distribution and morphology protein 10 (418 aa).

The protein belongs to the MDM10 family. In terms of assembly, component of the ER-mitochondria encounter structure (ERMES) or MDM complex, composed of MMM1, MDM10, MDM12 and MDM34. Associates with the mitochondrial outer membrane sorting assembly machinery SAM(core) complex.

The protein localises to the mitochondrion outer membrane. In terms of biological role, component of the ERMES/MDM complex, which serves as a molecular tether to connect the endoplasmic reticulum and mitochondria. Components of this complex are involved in the control of mitochondrial shape and protein biogenesis and may function in phospholipid exchange. MDM10 is involved in the late assembly steps of the general translocase of the mitochondrial outer membrane (TOM complex). Functions in the TOM40-specific route of the assembly of outer membrane beta-barrel proteins, including the association of TOM40 with the receptor TOM22 and small TOM proteins. Can associate with the SAM(core) complex as well as the MDM12-MMM1 complex, both involved in late steps of the major beta-barrel assembly pathway, that is responsible for biogenesis of all outer membrane beta-barrel proteins. May act as a switch that shuttles between both complexes and channels precursor proteins into the TOM40-specific pathway. Plays a role in mitochondrial morphology and in the inheritance of mitochondria. This Meyerozyma guilliermondii (strain ATCC 6260 / CBS 566 / DSM 6381 / JCM 1539 / NBRC 10279 / NRRL Y-324) (Yeast) protein is Mitochondrial distribution and morphology protein 10.